A 185-amino-acid polypeptide reads, in one-letter code: Somatotropin (185 aa).

Cys-52 and Cys-158 are disulfide-bonded. Glu-167 is a binding site for Zn(2+). Residues Cys-175 and Cys-183 are joined by a disulfide bond.

The protein belongs to the somatotropin/prolactin family.

The protein localises to the secreted. Functionally, growth hormone plays an important role in growth control and is involved in the regulation of several anabolic processes. Implicated as an osmoregulatory substance important for seawater adaptation. This chain is Somatotropin (gh), found in Katsuwonus pelamis (Skipjack tuna).